The sequence spans 307 residues: Nicotinamide/nicotinic acid mononucleotide adenylyltransferase 2 (307 aa).

The NAD(+) site is built by serine 16 and phenylalanine 17. Histidine 24 is an ATP binding site. Residues tryptophan 92 and threonine 95 each contribute to the NAD(+) site. S-palmitoyl cysteine attachment occurs at residues cysteine 164 and cysteine 165. The NAD(+) site is built by glycine 200, aspartate 202, leucine 212, tryptophan 213, and arginine 232. 271-274 (TKSR) provides a ligand contact to ATP.

It belongs to the eukaryotic NMN adenylyltransferase family. In terms of assembly, monomer. The cofactor is Mg(2+). In terms of processing, degraded in response to injured neurite. Degradation is caused by polyubiquitination by MYCBP2 after recognition by FBXO45. Palmitoylated; palmitoylation is required for membrane association.

It is found in the golgi apparatus membrane. The protein resides in the cytoplasmic vesicle membrane. Its subcellular location is the cytoplasm. The protein localises to the cell projection. It localises to the axon. The catalysed reaction is beta-nicotinamide D-ribonucleotide + ATP + H(+) = diphosphate + NAD(+). It catalyses the reaction nicotinate beta-D-ribonucleotide + ATP + H(+) = deamido-NAD(+) + diphosphate. It functions in the pathway cofactor biosynthesis; NAD(+) biosynthesis; NAD(+) from nicotinamide D-ribonucleotide: step 1/1. The protein operates within cofactor biosynthesis; NAD(+) biosynthesis; deamido-NAD(+) from nicotinate D-ribonucleotide: step 1/1. Inhibited by P1-(adenosine-5')-P3-(nicotinamide-riboside-5')-triphosphate (Np3AD) and P1-(adenosine-5')-P4-(nicotinamide-riboside-5')-tetraphosphate (Np4AD). In terms of biological role, nicotinamide/nicotinate-nucleotide adenylyltransferase that acts as an axon maintenance factor. Axon survival factor required for the maintenance of healthy axons: acts by delaying Wallerian axon degeneration, an evolutionarily conserved process that drives the loss of damaged axons. Catalyzes the formation of NAD(+) from nicotinamide mononucleotide (NMN) and ATP. Can also use the deamidated form; nicotinic acid mononucleotide (NaMN) as substrate but with a lower efficiency. Cannot use triazofurin monophosphate (TrMP) as substrate. Also catalyzes the reverse reaction, i.e. the pyrophosphorolytic cleavage of NAD(+). For the pyrophosphorolytic activity prefers NAD(+), NADH and NaAD as substrates and degrades nicotinic acid adenine dinucleotide phosphate (NHD) less effectively. Fails to cleave phosphorylated dinucleotides NADP(+), NADPH and NaADP(+). Also acts as an activator of ADP-ribosylation by supporting the catalytic activity of PARP16 and promoting mono-ADP-ribosylation of ribosomes by PARP16. May be involved in the maintenance of axonal integrity. The protein is Nicotinamide/nicotinic acid mononucleotide adenylyltransferase 2 (NMNAT2) of Bos taurus (Bovine).